The sequence spans 439 residues: Ribosomal protein uS12 methylthiotransferase RimO (439 aa).

The region spanning 4–114 is the MTTase N-terminal domain; sequence PKVGFVSLGC…VVRAVHGVAP (111 aa). The [4Fe-4S] cluster site is built by C13, C49, C78, C147, C151, and C154. A Radical SAM core domain is found at 133–370; the sequence is LTPRHYAYLK…MEHQQAISTA (238 aa). One can recognise a TRAM domain in the interval 373–439; sequence STRVGREIDV…EYDLWGERIA (67 aa).

The protein belongs to the methylthiotransferase family. RimO subfamily. The cofactor is [4Fe-4S] cluster.

The protein localises to the cytoplasm. It carries out the reaction L-aspartate(89)-[ribosomal protein uS12]-hydrogen + (sulfur carrier)-SH + AH2 + 2 S-adenosyl-L-methionine = 3-methylsulfanyl-L-aspartate(89)-[ribosomal protein uS12]-hydrogen + (sulfur carrier)-H + 5'-deoxyadenosine + L-methionine + A + S-adenosyl-L-homocysteine + 2 H(+). Functionally, catalyzes the methylthiolation of an aspartic acid residue of ribosomal protein uS12. The protein is Ribosomal protein uS12 methylthiotransferase RimO of Bordetella parapertussis (strain 12822 / ATCC BAA-587 / NCTC 13253).